Consider the following 342-residue polypeptide: WW domain binding protein 1-like (342 aa).

A helical transmembrane segment spans residues 42–62; it reads LWWFWLVWTIIIILSCCCVCH. 2 disordered regions span residues 133-247 and 292-320; these read LPPQ…RRFT and PGDE…RPPA. Over residues 158–173 the composition is skewed to low complexity; the sequence is SSPLSEPSRSSTRPPS. Serine 173 is subject to Phosphoserine. Over residues 212 to 240 the composition is skewed to basic and acidic residues; it reads LDKDAECREELLKDDSSEHGAPDSKEKTP.

It is found in the membrane. This is WW domain binding protein 1-like (WBP1L) from Homo sapiens (Human).